A 274-amino-acid polypeptide reads, in one-letter code: Aliphatic sulfonates import ATP-binding protein SsuB 2 (274 aa).

The ABC transporter domain maps to 21 to 242; sequence LALRGVARRF…SRGSARLAAL (222 aa). 53 to 60 is a binding site for ATP; it reads GRSGCGKS.

This sequence belongs to the ABC transporter superfamily. Aliphatic sulfonates importer (TC 3.A.1.17.2) family. In terms of assembly, the complex is composed of two ATP-binding proteins (SsuB), two transmembrane proteins (SsuC) and a solute-binding protein (SsuA).

It is found in the cell inner membrane. It catalyses the reaction ATP + H2O + aliphatic sulfonate-[sulfonate-binding protein]Side 1 = ADP + phosphate + aliphatic sulfonateSide 2 + [sulfonate-binding protein]Side 1.. Its function is as follows. Part of the ABC transporter complex SsuABC involved in aliphatic sulfonates import. Responsible for energy coupling to the transport system. This chain is Aliphatic sulfonates import ATP-binding protein SsuB 2, found in Pseudomonas aeruginosa (strain UCBPP-PA14).